The following is a 1302-amino-acid chain: Multidrug resistance protein homolog 65 (1302 aa).

Residues M1–E23 form a disordered region. Residues M1–L48 lie on the Cytoplasmic side of the membrane. An ABC transmembrane type-1 1 domain is found at L48–T369. A helical transmembrane segment spans residues F49 to Y69. The Extracellular segment spans residues S70 to I118. N-linked (GlcNAc...) asparagine glycosylation occurs at N103. Residues S119–L147 form a helical membrane-spanning segment. Residues R148–E194 lie on the Cytoplasmic side of the membrane. A helical membrane pass occupies residues K195–S215. Residues Y216–A223 lie on the Extracellular side of the membrane. Residues V224 to Q242 form a helical membrane-spanning segment. At G243 to G302 the chain is on the cytoplasmic side. The helical transmembrane segment at L303–G323 threads the bilayer. The Extracellular segment spans residues V324–A341. A helical transmembrane segment spans residues I342–P362. Topologically, residues F363–Y731 are cytoplasmic. Residues V405 to A641 enclose the ABC transporter 1 domain. ATP is bound at residue G440–S447. The helical transmembrane segment at L732 to F753 threads the bilayer. The ABC transmembrane type-1 2 domain maps to L732 to A1020. At G754 to S776 the chain is on the extracellular side. The chain crosses the membrane as a helical span at residues W777–N798. Residues Y799 to P852 lie on the Cytoplasmic side of the membrane. Residues L853–Y873 form a helical membrane-spanning segment. N874 is a topological domain (extracellular). Residues W875–L894 traverse the membrane as a helical segment. At E895–R956 the chain is on the cytoplasmic side. The chain crosses the membrane as a helical span at residues W957–L977. Topologically, residues C978–D993 are extracellular. A helical membrane pass occupies residues I994–F1014. The Cytoplasmic portion of the chain corresponds to T1015 to H1302. One can recognise an ABC transporter 2 domain in the interval V1059–T1298. G1094–S1101 lines the ATP pocket.

This sequence belongs to the ABC transporter superfamily. ABCB family. Multidrug resistance exporter (TC 3.A.1.201) subfamily.

It is found in the membrane. The catalysed reaction is ATP + H2O + xenobioticSide 1 = ADP + phosphate + xenobioticSide 2.. This chain is Multidrug resistance protein homolog 65 (Mdr65), found in Drosophila melanogaster (Fruit fly).